The chain runs to 2528 residues: Highly reducing polyketide synthase pspA (2528 aa).

Residues 1-53 (MLAQDVEFVDLPPPEATAGAATTDNETSSFNSNPVPTPSEASSIGPPHQLPVP) form a disordered region. Over residues 24–42 (DNETSSFNSNPVPTPSEAS) the composition is skewed to polar residues. Positions 63–483 (VEPMAICGMA…GSNAHVLLGS (421 aa)) constitute a Ketosynthase family 3 (KS3) domain. Residues C235, H371, and H406 each act as for beta-ketoacyl synthase activity in the active site. The malonyl-CoA:ACP transacylase (MAT) domain stretch occupies residues 590-909 (TFTGQGAQWA…HKDLLKAVGE (320 aa)). Residues 961–1089 (HDILGSRVLE…GQVCAGSDRE (129 aa)) are N-terminal hotdog fold. The tract at residues 961–1230 (HDILGSRVLE…VSNGHVTIDI (270 aa)) is dehydratase (DH) domain. In terms of domain architecture, PKS/mFAS DH spans 961 to 1244 (HDILGSRVLE…MSAIGDAADA (284 aa)). The active-site Proton acceptor; for dehydratase activity is H993. Residues 1099 to 1244 (PRQLSRRGWY…MSAIGDAADA (146 aa)) form a C-terminal hotdog fold region. The Proton donor; for dehydratase activity role is filled by D1160. Positions 1409 to 1587 (VFLELLAHRK…GFSGINLVSH (179 aa)) are methyltransferase (CMet) domain. Residues 1803–2119 (GLVDTLCWKS…RGQHIGKIVI (317 aa)) are enoyl reductase (ER) (ER) domain. A ketoreductase (KR) domain region spans residues 2143–2322 (RAYLFVGGLG…ASTVNIGVIQ (180 aa)). The 79-residue stretch at 2447 to 2525 (ETAELLAGEI…DLGVLAQKKL (79 aa)) folds into the Carrier domain. An O-(pantetheine 4'-phosphoryl)serine modification is found at S2485.

The enzyme catalyses 9 malonyl-CoA + acetyl-CoA + S-adenosyl-L-methionine + 13 NADPH + 20 H(+) = soppiline A + S-adenosyl-L-homocysteine + 9 CO2 + 13 NADP(+) + 10 CoA + 7 H2O. The protein operates within secondary metabolite biosynthesis. Functionally, highly reducing polyketide synthase; part of the gene cluster that mediates the biosynthesis of the alkylresorcinols called soppilines. The biosynthesis starts with the HR-PKS pspA-catalyzed carbon chain assembly through nine chain elongation cycles, using acetyl CoA and malonyl CoA as a starter and extender units, respectively, to produce the polyketide soppiline A. In the first round, the KR, DH, and CMeT domains work to produce 2-methyl-2-butenyl thioester. In rounds 2 to 5, the KR, DH, and ER domains fully catalyze the reduction of the elongated beta-ketothioester, resulting in the insertion of eight methylene units. The unusual Z,E,Z-triene motif is likely constructed during rounds 6 to 8. Typically, the DH domain introduces a double bond at an alpha,beta-position of an elongated polyketide chain, with the dehydration of a beta-hydroxy group. The last extension cycle would be carried out with L-oriented beta-ketoreduction by the KR domain to produce beta-hydroxy carboxylic acid soppiline A. The type III PKS pspB intercepts the elongated polyketide chain at round 8 from the HR-PKS pspA, followed by a tri-keto extension and decarboxylative aldol cyclization to produce 1,3,5-trisubstituted alkylresorcinol soppiline B. Subsequently, the cytochrome P450 monooxygenase pspC catalyzes three-step oxidations at the C-4 methyl group to carboxylic acid to yield soppiline C. The sequence is that of Highly reducing polyketide synthase pspA from Penicillium soppii.